Reading from the N-terminus, the 494-residue chain is V-type proton ATPase subunit B (494 aa).

Position 384 (Arg384) interacts with ATP.

This sequence belongs to the ATPase alpha/beta chains family. In terms of assembly, V-ATPase is a heteromultimeric enzyme made up of two complexes: the ATP-hydrolytic V1 complex and the proton translocation V0 complex. The V1 complex consists of three catalytic AB heterodimers that form a heterohexamer, three peripheral stalks each consisting of EG heterodimers, one central rotor including subunits D and F, and the regulatory subunits C and H. The proton translocation complex V0 consists of the proton transport subunit a, a ring of proteolipid subunits c9c'', rotary subunit d, subunits e and f, and the accessory subunits VhaAC45 and ATP6AP2.

Its function is as follows. Non-catalytic subunit of the V1 complex of vacuolar(H+)-ATPase (V-ATPase), a multisubunit enzyme composed of a peripheral complex (V1) that hydrolyzes ATP and a membrane integral complex (V0) that translocates protons. V-ATPase is responsible for acidifying and maintaining the pH of intracellular compartments and in some cell types, is targeted to the plasma membrane, where it is responsible for acidifying the extracellular environment. Essential for the proper assembly and activity of V-ATPase. This is V-type proton ATPase subunit B (VHA55) from Manduca sexta (Tobacco hawkmoth).